An 859-amino-acid polypeptide reads, in one-letter code: Kinesin-like protein KIN-14T (859 aa).

Positions 91-411 (NIRVFCRVKP…LNFATRAKNI (321 aa)) constitute a Kinesin motor domain. 168–175 (GQTGTGKT) serves as a coordination point for ATP. Residues 422 to 463 (QAKKEAVMMNLQKMMEKIEQEREMSLRKMRNLNETLEKLTGK) are a coiled coil. The disordered stretch occupies residues 511–530 (LSGADFSVTPNSSSFKSRRN). Polar residues predominate over residues 518 to 530 (VTPNSSSFKSRRN).

Belongs to the TRAFAC class myosin-kinesin ATPase superfamily. Kinesin family. KIN-14 subfamily.

This Arabidopsis thaliana (Mouse-ear cress) protein is Kinesin-like protein KIN-14T.